Reading from the N-terminus, the 312-residue chain is Large ribosomal subunit protein uL15m (312 aa).

The segment at 63–89 (RIRKGRGPSSGYGKTAGRGTKGQKAHG) is disordered. Gly residues predominate over residues 70–82 (PSSGYGKTAGRGT).

This sequence belongs to the universal ribosomal protein uL15 family. As to quaternary structure, component of the mitochondrial large ribosomal subunit (mt-LSU). Mature N.crassa 74S mitochondrial ribosomes consist of a small (37S) and a large (54S) subunit. The 37S small subunit contains a 16S ribosomal RNA (16S mt-rRNA) and 32 different proteins. The 54S large subunit contains a 23S rRNA (23S mt-rRNA) and 42 different proteins.

It is found in the mitochondrion. Its function is as follows. Component of the mitochondrial ribosome (mitoribosome), a dedicated translation machinery responsible for the synthesis of mitochondrial genome-encoded proteins, including at least some of the essential transmembrane subunits of the mitochondrial respiratory chain. The mitoribosomes are attached to the mitochondrial inner membrane and translation products are cotranslationally integrated into the membrane. The polypeptide is Large ribosomal subunit protein uL15m (mrpl10) (Neurospora crassa (strain ATCC 24698 / 74-OR23-1A / CBS 708.71 / DSM 1257 / FGSC 987)).